Consider the following 421-residue polypeptide: Diaminobutyrate--2-oxoglutarate transaminase (421 aa).

Lys-262 bears the N6-(pyridoxal phosphate)lysine mark.

This sequence belongs to the class-III pyridoxal-phosphate-dependent aminotransferase family. Requires pyridoxal 5'-phosphate as cofactor.

The catalysed reaction is L-2,4-diaminobutanoate + 2-oxoglutarate = L-aspartate 4-semialdehyde + L-glutamate. The protein operates within amine and polyamine biosynthesis; ectoine biosynthesis; L-ectoine from L-aspartate 4-semialdehyde: step 1/3. In terms of biological role, catalyzes reversively the conversion of L-aspartate beta-semialdehyde (ASA) to L-2,4-diaminobutyrate (DABA) by transamination with L-glutamate. The sequence is that of Diaminobutyrate--2-oxoglutarate transaminase (ectB) from Vibrio parahaemolyticus serotype O3:K6 (strain RIMD 2210633).